The sequence spans 430 residues: Glutamate-1-semialdehyde 2,1-aminomutase (430 aa).

An N6-(pyridoxal phosphate)lysine modification is found at Lys265.

This sequence belongs to the class-III pyridoxal-phosphate-dependent aminotransferase family. HemL subfamily. Homodimer. The cofactor is pyridoxal 5'-phosphate.

It is found in the cytoplasm. The catalysed reaction is (S)-4-amino-5-oxopentanoate = 5-aminolevulinate. It functions in the pathway porphyrin-containing compound metabolism; protoporphyrin-IX biosynthesis; 5-aminolevulinate from L-glutamyl-tRNA(Glu): step 2/2. The chain is Glutamate-1-semialdehyde 2,1-aminomutase from Shewanella sp. (strain MR-4).